A 403-amino-acid chain; its full sequence is Aromatic-L-amino-acid decarboxylase (403 aa).

Thr-8 contributes to the substrate binding site. Residues Ala-74 and Ser-75 each coordinate pyridoxal 5'-phosphate. Position 118 (His-118) interacts with substrate. His-118 is an active-site residue. Pyridoxal 5'-phosphate contacts are provided by Asp-197 and Asn-226. Lys-229 carries the N6-(pyridoxal phosphate)lysine modification. Residues 250–276 (NAFNVDPLYLKHDMQGSAPDYRHWQIP) are disordered.

It belongs to the group II decarboxylase family. In terms of assembly, homodimer. It depends on pyridoxal 5'-phosphate as a cofactor.

It carries out the reaction L-dopa + H(+) = dopamine + CO2. The catalysed reaction is 5-hydroxy-L-tryptophan + H(+) = serotonin + CO2. Functionally, catalyzes the decarboxylation of L-3,4-dihydroxyphenylalanine (L-DOPA) to dopamine and L-5-hydroxytryptophan (5-HTP) to serotonin. Catalyzes the formation of serotonin more efficiently than dopamine. Displays no activity to tyrosine. Variation in the synthesis of bioamines may be a factor contributing to natural variation in life span. The chain is Aromatic-L-amino-acid decarboxylase (Ddc) from Drosophila lebanonensis (Fruit fly).